Here is a 991-residue protein sequence, read N- to C-terminus: Regulator of telomere elongation helicase 1 homolog (991 aa).

A Helicase ATP-binding domain is found at 7–319 (NGIPVNFPFE…DDLVLLKEIL (313 aa)). 42–49 (SPTGTGKT) contacts ATP. Positions 148, 166, 175, and 211 each coordinate [4Fe-4S] cluster. Positions 254–257 (DEAH) match the DEAH box motif. The interval 812-833 (SMKVNPHSRSTKSAGDDAEAGG) is disordered.

This sequence belongs to the helicase family. RAD3/XPD subfamily.

Its subcellular location is the nucleus. The enzyme catalyses ATP + H2O = ADP + phosphate + H(+). Its function is as follows. A probable ATP-dependent DNA helicase implicated in DNA repair and the maintenance of genomic stability. Acts as an anti-recombinase to counteract toxic recombination and limit crossover during meiosis. Regulates meiotic recombination and crossover homeostasis by physically dissociating strand invasion events and thereby promotes noncrossover repair by meiotic synthesis dependent strand annealing (SDSA) as well as disassembly of D loop recombination intermediates. The protein is Regulator of telomere elongation helicase 1 homolog of Anopheles gambiae (African malaria mosquito).